A 226-amino-acid chain; its full sequence is DNA mismatch repair protein MutH (226 aa).

This sequence belongs to the MutH family.

It localises to the cytoplasm. In terms of biological role, sequence-specific endonuclease that cleaves unmethylated GATC sequences. It is involved in DNA mismatch repair. This is DNA mismatch repair protein MutH from Haemophilus ducreyi (strain 35000HP / ATCC 700724).